Here is a 484-residue protein sequence, read N- to C-terminus: Oxysterol-binding protein-related protein 2 (484 aa).

Residues Ser19 and Ser20 each carry the phosphoserine modification. The interval 35-61 (DLDTSKSTRSGKNGEKPQQENGIQKHR) is disordered. A 1,2-diacyl-sn-glycero-3-phospho-(1D-myo-inositol-4,5-bisphosphate) is bound by residues Lys90 and 178–179 (HH). Composition is skewed to basic and acidic residues over residues 319-340 (KQEK…EKAN) and 424-450 (SQEK…EWRT). Disordered stretches follow at residues 319-348 (KQEK…GDVA) and 423-454 (ASQE…RWFS). Residue 431–435 (EEKQR) coordinates a 1,2-diacyl-sn-glycero-3-phospho-(1D-myo-inositol-4,5-bisphosphate).

Belongs to the OSBP family. Monomer. Homotetramer; phosphatidylinositol-4,5-bisphosphate binding promotes formation of stable tetramers. Interacts with DIAPH1. In terms of tissue distribution, detected in cochlea, in inner and outer hair cells in the organ of Corti (at protein level).

The protein localises to the cytoplasm. It is found in the cytosol. Its subcellular location is the lipid droplet. It localises to the cell membrane. Intracellular transport protein that binds sterols and phospholipids and mediates lipid transport between intracellular compartments. Increases plasma membrane cholesterol levels and decreases phosphatidylinositol-4,5-bisphosphate levels in the cell membrane. Binds phosphoinositides, such as phosphatidylinositol-4,5-bisphosphate. Exhibits strong binding to phosphatidic acid and weak binding to phosphatidylinositol 3-phosphate. Binds cholesterol, dehydroergosterol, 22(R)-hydroxycholesterol and 25-hydroxycholesterol (in vitro). The chain is Oxysterol-binding protein-related protein 2 (Osbpl2) from Mus musculus (Mouse).